Here is a 258-residue protein sequence, read N- to C-terminus: Isoprenyl transferase 2 (258 aa).

The active site involves aspartate 35. A Mg(2+)-binding site is contributed by aspartate 35. Residues 36–39 (GNRR), tryptophan 40, arginine 50, and 81–83 (SDD) contribute to the substrate site. The active-site Proton acceptor is asparagine 84. Substrate-binding positions include arginine 87, arginine 207, and 213-215 (RLS). Glutamate 226 lines the Mg(2+) pocket.

Belongs to the UPP synthase family. Homodimer. Mg(2+) serves as cofactor.

Its function is as follows. Catalyzes the condensation of isopentenyl diphosphate (IPP) with allylic pyrophosphates generating different type of terpenoids. In Streptomyces coelicolor (strain ATCC BAA-471 / A3(2) / M145), this protein is Isoprenyl transferase 2.